The sequence spans 406 residues: Fructose-1,6-bisphosphatase, chloroplastic (406 aa).

Residues 1 to 47 (MAAAATTSSHLLLLSRQQAAASLQCGLSFRRQPGRLAGGSSAPSVRC) constitute a chloroplast transit peptide. Positions 128, 157, 178, 180, and 181 each coordinate Mg(2+). A substrate-binding site is contributed by 181–184 (DGSS). A disulfide bridge links C222 with C227. Substrate contacts are provided by N286, Y318, Y336, Y338, and K348. Mg(2+) is bound at residue E354.

This sequence belongs to the FBPase class 1 family. In terms of assembly, homotetramer. Mg(2+) serves as cofactor.

Its subcellular location is the plastid. The protein resides in the chloroplast stroma. The enzyme catalyses beta-D-fructose 1,6-bisphosphate + H2O = beta-D-fructose 6-phosphate + phosphate. It participates in carbohydrate biosynthesis; Calvin cycle. Inhibited by sodium chloride. Catalyzes the irreversible reaction from fructose-1,6-bisphosphate to fructose-6-phosphate and inorganic phosphate, to regenerate the primary CO(2) acceptor molecule, ribulose-1,5-bisphosphate. Involved in the regulation of photosynthetic performance and sucrose synthesis. This is Fructose-1,6-bisphosphatase, chloroplastic from Oryza sativa subsp. indica (Rice).